The chain runs to 885 residues: Alanine--tRNA ligase (885 aa).

Zn(2+) contacts are provided by H572, H576, C675, and H679.

The protein belongs to the class-II aminoacyl-tRNA synthetase family. Zn(2+) serves as cofactor.

It is found in the cytoplasm. It carries out the reaction tRNA(Ala) + L-alanine + ATP = L-alanyl-tRNA(Ala) + AMP + diphosphate. Functionally, catalyzes the attachment of alanine to tRNA(Ala) in a two-step reaction: alanine is first activated by ATP to form Ala-AMP and then transferred to the acceptor end of tRNA(Ala). Also edits incorrectly charged Ser-tRNA(Ala) and Gly-tRNA(Ala) via its editing domain. This is Alanine--tRNA ligase from Leifsonia xyli subsp. xyli (strain CTCB07).